The following is a 175-amino-acid chain: ATP synthase subunit b (175 aa).

Residues 23–43 (TGITFLVLLFVLGKFAWGPIV) form a helical membrane-spanning segment.

The protein belongs to the ATPase B chain family. F-type ATPases have 2 components, F(1) - the catalytic core - and F(0) - the membrane proton channel. F(1) has five subunits: alpha(3), beta(3), gamma(1), delta(1), epsilon(1). F(0) has three main subunits: a(1), b(2) and c(10-14). The alpha and beta chains form an alternating ring which encloses part of the gamma chain. F(1) is attached to F(0) by a central stalk formed by the gamma and epsilon chains, while a peripheral stalk is formed by the delta and b chains.

The protein localises to the cell inner membrane. Its function is as follows. F(1)F(0) ATP synthase produces ATP from ADP in the presence of a proton or sodium gradient. F-type ATPases consist of two structural domains, F(1) containing the extramembraneous catalytic core and F(0) containing the membrane proton channel, linked together by a central stalk and a peripheral stalk. During catalysis, ATP synthesis in the catalytic domain of F(1) is coupled via a rotary mechanism of the central stalk subunits to proton translocation. Functionally, component of the F(0) channel, it forms part of the peripheral stalk, linking F(1) to F(0). The chain is ATP synthase subunit b from Anaeromyxobacter sp. (strain Fw109-5).